The sequence spans 305 residues: Protoheme IX farnesyltransferase 1 (305 aa).

The next 8 membrane-spanning stretches (helical) occupy residues 22–42 (IKTGIIKSNLVPMFAGLTLAL), 53–73 (IPEILFAFIGSILIIGAAGAF), 94–114 (VTGDISPKTALWLGIFMTIFG), 115–135 (LVFLALTTYLAAILGFIGLFL), 154–174 (IGSVSGAMPPLIGWAAIYPDV), 179–199 (IIGLFIIMIIWQMPHFYAIAI), 230–250 (LVILIIISILLGSLSIGLMLV), and 283–303 (LFHMTILFSTVIIYSLVGIFF).

This sequence belongs to the UbiA prenyltransferase family. Protoheme IX farnesyltransferase subfamily. Interacts with CtaA.

Its subcellular location is the cell membrane. It catalyses the reaction heme b + (2E,6E)-farnesyl diphosphate + H2O = Fe(II)-heme o + diphosphate. It functions in the pathway porphyrin-containing compound metabolism; heme O biosynthesis; heme O from protoheme: step 1/1. Its function is as follows. Converts heme B (protoheme IX) to heme O by substitution of the vinyl group on carbon 2 of heme B porphyrin ring with a hydroxyethyl farnesyl side group. The sequence is that of Protoheme IX farnesyltransferase 1 from Bacillus cytotoxicus (strain DSM 22905 / CIP 110041 / 391-98 / NVH 391-98).